The chain runs to 610 residues: UvrABC system protein C (610 aa).

The GIY-YIG domain maps to 16–94; sequence SQPGVYRMYD…IKLYQPRYNV (79 aa). The region spanning 204–239 is the UVR domain; the sequence is DQVLTQLISRMETASQNLEFEEAARIRDQIQAVRRV.

It belongs to the UvrC family. Interacts with UvrB in an incision complex.

Its subcellular location is the cytoplasm. Its function is as follows. The UvrABC repair system catalyzes the recognition and processing of DNA lesions. UvrC both incises the 5' and 3' sides of the lesion. The N-terminal half is responsible for the 3' incision and the C-terminal half is responsible for the 5' incision. In Escherichia coli O1:K1 / APEC, this protein is UvrABC system protein C.